The sequence spans 242 residues: Small ribosomal subunit protein uS2 (242 aa).

The protein belongs to the universal ribosomal protein uS2 family.

The sequence is that of Small ribosomal subunit protein uS2 from Aeromonas salmonicida (strain A449).